A 136-amino-acid polypeptide reads, in one-letter code: ATP synthase epsilon chain (136 aa).

It belongs to the ATPase epsilon chain family. In terms of assembly, F-type ATPases have 2 components, CF(1) - the catalytic core - and CF(0) - the membrane proton channel. CF(1) has five subunits: alpha(3), beta(3), gamma(1), delta(1), epsilon(1). CF(0) has three main subunits: a, b and c.

The protein resides in the cell membrane. In terms of biological role, produces ATP from ADP in the presence of a proton gradient across the membrane. The polypeptide is ATP synthase epsilon chain (Exiguobacterium sp. (strain ATCC BAA-1283 / AT1b)).